We begin with the raw amino-acid sequence, 541 residues long: Membrane protein insertase YidC (541 aa).

A run of 6 helical transmembrane segments spans residues phenylalanine 7 to histidine 27, tyrosine 289 to proline 309, isoleucine 356 to tyrosine 376, leucine 430 to valine 450, leucine 463 to glutamine 483, and isoleucine 498 to valine 518.

This sequence belongs to the OXA1/ALB3/YidC family. Type 1 subfamily. In terms of assembly, interacts with the Sec translocase complex via SecD. Specifically interacts with transmembrane segments of nascent integral membrane proteins during membrane integration.

The protein resides in the cell inner membrane. In terms of biological role, required for the insertion and/or proper folding and/or complex formation of integral membrane proteins into the membrane. Involved in integration of membrane proteins that insert both dependently and independently of the Sec translocase complex, as well as at least some lipoproteins. Aids folding of multispanning membrane proteins. This chain is Membrane protein insertase YidC, found in Ruthia magnifica subsp. Calyptogena magnifica.